A 338-amino-acid chain; its full sequence is Anthranilate phosphoribosyltransferase (338 aa).

Residues G78, 81–82 (GD), S86, 88–91 (NIST), 106–114 (KHGNKSVTS), and S118 contribute to the 5-phospho-alpha-D-ribose 1-diphosphate site. Residue G78 coordinates anthranilate. S90 contributes to the Mg(2+) binding site. Anthranilate is bound at residue N109. R163 contacts anthranilate. Mg(2+) is bound by residues D222 and E223.

It belongs to the anthranilate phosphoribosyltransferase family. Homodimer. Mg(2+) serves as cofactor.

The catalysed reaction is N-(5-phospho-beta-D-ribosyl)anthranilate + diphosphate = 5-phospho-alpha-D-ribose 1-diphosphate + anthranilate. It functions in the pathway amino-acid biosynthesis; L-tryptophan biosynthesis; L-tryptophan from chorismate: step 2/5. Its function is as follows. Catalyzes the transfer of the phosphoribosyl group of 5-phosphorylribose-1-pyrophosphate (PRPP) to anthranilate to yield N-(5'-phosphoribosyl)-anthranilate (PRA). The polypeptide is Anthranilate phosphoribosyltransferase (Staphylococcus saprophyticus subsp. saprophyticus (strain ATCC 15305 / DSM 20229 / NCIMB 8711 / NCTC 7292 / S-41)).